We begin with the raw amino-acid sequence, 696 residues long: Interleukin-1 receptor accessory protein-like 1 (696 aa).

An N-terminal signal peptide occupies residues 1–24 (MKAPIPHLILLYATFTQSLKVVTK). Positions 25 to 134 (RGSADGCTDW…YCMKVSISLT (110 aa)) constitute an Ig-like C2-type 1 domain. At 25-357 (RGSADGCTDW…LLHKRELMYT (333 aa)) the chain is on the extracellular side. Cystine bridges form between Cys31–Cys126 and Cys53–Cys118. 3 N-linked (GlcNAc...) asparagine glycosylation sites follow: Asn63, Asn122, and Asn138. Cystine bridges form between Cys143/Cys185 and Cys164/Cys216. Ig-like C2-type domains are found at residues 143–232 (CYNS…TELT) and 242–350 (PKLL…VLLH). Asn213, Asn264, and Asn331 each carry an N-linked (GlcNAc...) asparagine glycan. Cys267 and Cys334 form a disulfide bridge. A helical membrane pass occupies residues 358-378 (VELAGGLGAILLLLVCSVTIY). Over 379-696 (KCYKIEIMLF…RETSISSVIW (318 aa)) the chain is Cytoplasmic. The TIR domain maps to 403–559 (KDYDAYLSYT…KFWKRLQYEM (157 aa)). Residue Glu491 is part of the active site. An interaction with NCS1 region spans residues 549–644 (SKFWKRLQYE…TGTLPLTSIG (96 aa)). The interval 659-680 (GQRPQTKSSREPNPDEAHTNSA) is disordered. A compositionally biased stretch (basic and acidic residues) spans 666 to 676 (SSREPNPDEAH).

Belongs to the interleukin-1 receptor family. As to quaternary structure, homodimer. Interacts (calcium-independent) with NCS1/FREQ. Interacts (via the first immunoglobilin domain) with PTPRD (via the second immunoglobilin domain); this interaction is PTPRD-splicing-dependent and induces pre- and post-synaptic differentiation of neurons and is required for IL1RAPL1-mediated synapse formation.

It localises to the cell membrane. Its subcellular location is the cytoplasm. The protein localises to the cell projection. The protein resides in the axon. It is found in the dendrite. It catalyses the reaction NAD(+) + H2O = ADP-D-ribose + nicotinamide + H(+). Functionally, may regulate secretion and presynaptic differentiation through inhibition of the activity of N-type voltage-gated calcium channel. May activate the MAP kinase JNK. Plays a role in neurite outgrowth. During dendritic spine formation can bidirectionally induce pre- and post-synaptic differentiation of neurons by trans-synaptically binding to PTPRD. This is Interleukin-1 receptor accessory protein-like 1 (Il1rapl1) from Rattus norvegicus (Rat).